Reading from the N-terminus, the 304-residue chain is Ornithine carbamoyltransferase (304 aa).

Residues 47–50, arginine 98, and 125–128 each bind carbamoyl phosphate; these read STRT and HPCQ. L-ornithine-binding positions include asparagine 156, aspartate 221, and 225 to 226; that span reads SM. Residues 262–263 and arginine 290 contribute to the carbamoyl phosphate site; that span reads CL.

The protein belongs to the aspartate/ornithine carbamoyltransferase superfamily. OTCase family.

The protein localises to the cytoplasm. The catalysed reaction is carbamoyl phosphate + L-ornithine = L-citrulline + phosphate + H(+). It functions in the pathway amino-acid biosynthesis; L-arginine biosynthesis; L-arginine from L-ornithine and carbamoyl phosphate: step 1/3. Functionally, reversibly catalyzes the transfer of the carbamoyl group from carbamoyl phosphate (CP) to the N(epsilon) atom of ornithine (ORN) to produce L-citrulline. This chain is Ornithine carbamoyltransferase, found in Methanococcus aeolicus (strain ATCC BAA-1280 / DSM 17508 / OCM 812 / Nankai-3).